The primary structure comprises 142 residues: MLEGWFLWFILFWVIMMVVLLSIGGFFMFRKFLKRLPKEDGRSELDWQDYYIENSRHLWNDENKQFLDELTAPVPELFRDAAKAKIAGKIGELALKEKVAKIDQQLMIKGYILATPKRDHTFLKRHLRDKKIDLEPYQTLLK.

Residues 6–26 (FLWFILFWVIMMVVLLSIGGF) traverse the membrane as a helical segment.

In terms of assembly, interacts with the N-terminal D1 domain of dynamin-like protein DynA.

The protein resides in the cell membrane. The polypeptide is Membrane protein YneK (yneK) (Bacillus subtilis (strain 168)).